A 1692-amino-acid chain; its full sequence is Flagellar attachment zone protein 1 (1692 aa).

3 coiled-coil regions span residues 613–657 (REQE…KLQK), 684–864 (VTLD…HKVR), and 903–1607 (NDHM…SALE). Tandem repeats lie at residues 1012 to 1025 (EELELKAAENEKLA), 1026 to 1039 (EELELKAAENEKLA), 1040 to 1053 (EELELKVAENEKLA), 1054 to 1067 (EELELKVAENEKLA), 1068 to 1081 (EELELKAAENEKLA), 1082 to 1095 (EELELKAAENEKLA), 1096 to 1109 (EELELKAAENEKLA), 1110 to 1123 (EELELKAAENEKLA), 1124 to 1137 (EELELKAAENEKLA), 1138 to 1151 (EELELKAAENEKLA), 1152 to 1165 (EELELKAAENEKLA), 1166 to 1179 (EELELKVAENEKLA), 1180 to 1193 (EELELKAAENEKLA), 1194 to 1207 (EELELKVAENEKLA), 1208 to 1221 (EELELKAAENEKLA), 1222 to 1235 (EELELKAAENEKLA), 1236 to 1249 (EELELKAAENEKLA), 1250 to 1263 (EELELKAAENEKLA), 1264 to 1277 (EELELKVAENEKLA), 1278 to 1291 (EELELKAAENEKLA), 1292 to 1305 (EELELKVAENEKLA), 1306 to 1319 (EELELKAAENEKLA), 1320 to 1333 (EELELKVAENEKLA), 1334 to 1347 (EELELKAAENEKLA), 1348 to 1361 (EELELKVAENEKLA), 1362 to 1375 (EELELKAAENEKLA), 1376 to 1389 (EELELKAAENEKLA), 1390 to 1403 (EELELKAAENEKLA), 1404 to 1417 (EELELKAAENEKLA), 1418 to 1431 (EELELKAAENEKLA), 1432 to 1445 (EELELKVAENEKLA), 1446 to 1459 (EELELKAAENEKLA), 1460 to 1473 (EELELKVAENEKLA), 1474 to 1487 (EELELKAAENEKLA), 1488 to 1501 (EELELKAAENEKLA), 1502 to 1515 (EELELKAAENEKLA), and 1516 to 1529 (EELELKVAENKRLA). The interval 1012–1529 (EELELKAAEN…LKVAENKRLA (518 aa)) is 37 X 14 AA tandem repeats of E-E-L-E-L-K-[VA]-A-E-N-E-K-L-A.

The protein localises to the cell projection. It is found in the cilium. It localises to the flagellum. Functionally, a component of FAZ filament that is required for correct FAZ assembly and attachment. Not essential for new flagellum growth. The chain is Flagellar attachment zone protein 1 from Trypanosoma brucei brucei (strain 927/4 GUTat10.1).